Here is a 383-residue protein sequence, read N- to C-terminus: Acetyl-CoA acetyltransferase (383 aa).

The active-site Acyl-thioester intermediate is the cysteine 85. CoA-binding residues include cysteine 206, serine 207, isoleucine 209, and lysine 328. Histidine 332 serves as the catalytic Proton acceptor.

The protein belongs to the thiolase-like superfamily. Thiolase family. As to quaternary structure, interacts with HMG-CoA synthase (HMGCS) that catalyzes the second step in the pathway and with a DUF35 protein. The acetoacetyl-CoA thiolase/HMG-CoA synthase complex channels the intermediate via a fused CoA-binding site, which allows for efficient coupling of the endergonic thiolase reaction with the exergonic HMGCS reaction.

It carries out the reaction 2 acetyl-CoA = acetoacetyl-CoA + CoA. It functions in the pathway metabolic intermediate biosynthesis; (R)-mevalonate biosynthesis; (R)-mevalonate from acetyl-CoA: step 1/3. Functionally, catalyzes the condensation of two acetyl-coA molecules into acetoacetyl-CoA. Functions in the mevalonate (MVA) pathway leading to isopentenyl diphosphate (IPP), a key precursor for the biosynthesis of isoprenoid compounds that are building blocks of archaeal membrane lipids. The sequence is that of Acetyl-CoA acetyltransferase from Methanothermobacter thermautotrophicus (strain ATCC 29096 / DSM 1053 / JCM 10044 / NBRC 100330 / Delta H) (Methanobacterium thermoautotrophicum).